The chain runs to 723 residues: Host cell factor 2 (723 aa).

Kelch repeat units follow at residues 34–79 (LMII…GFVC), 83–130 (RILV…RLGH), 207–255 (KMYV…VIGN), and 257–305 (MYIF…DSQE). 3 Fibronectin type-III domains span residues 357-436 (PPAP…ANCT), 516-606 (TPSN…TCIP), and 608-720 (FPGA…SKKA). Residues 398–472 (AASPDASAAP…VALHSPLAPN (75 aa)) are disordered. Residues 419–433 (QGSNSILHNSVSDPA) show a composition bias toward polar residues.

In terms of assembly, binds KMT2A/MLL1. Component of the MLL1/MLL complex, at least composed of KMT2A/MLL1, ASH2L, RBBP5, DPY30, WDR5, MEN1, HCFC1 and HCFC2. Interacts with TASOR.

Its subcellular location is the cytoplasm. It is found in the nucleus. The sequence is that of Host cell factor 2 (Hcfc2) from Rattus norvegicus (Rat).